Consider the following 65-residue polypeptide: Double gene block protein 1 (65 aa).

A disordered region spans residues 1–41; it reads MDSQRTVELTNPRGRSKERGDSGGKQKNSMGRKIANDAISE. Residues 15 to 24 show a composition bias toward basic and acidic residues; the sequence is RSKERGDSGG. An RNA-binding region spans residues 17–43; the sequence is KERGDSGGKQKNSMGRKIANDAISESK.

This sequence belongs to the carmovirus double gene block protein 1 family. In terms of assembly, homodimer.

Its function is as follows. Cell-to-cell movement. Displays RNA-binding activity. In Melon necrotic spot virus (MNSV), this protein is Double gene block protein 1.